The primary structure comprises 2614 residues: Talin-B (2614 aa).

Residues 85 to 369 (RPLKVRLMDE…GYIEILMKKR (285 aa)) form the FERM domain. The interval 393-421 (RGQTSQATTSSSLSGYDGNGGREGQYSAP) is disordered. Low complexity predominate over residues 395 to 406 (QTSQATTSSSLS). Coiled-coil stretches lie at residues 1938-1965 (TQNI…ASGK) and 2033-2057 (NKAI…LVQS). The I/LWEQ domain occupies 2219-2460 (LLFAAGESLE…SIRKKEYSDQ (242 aa)). The disordered stretch occupies residues 2454–2557 (KKEYSDQTGN…AAPTAAAPNK (104 aa)). Polar residues predominate over residues 2473 to 2487 (KPTTSISVGITPTKR). Residues 2517–2537 (KKPAPSQAPSSPVAPVSAPVS) show a composition bias toward low complexity. Pro residues predominate over residues 2538-2548 (KPSPKPAPKPA). One can recognise an HP domain in the interval 2553–2614 (AAPNKTYTLE…NNIKTKLGLF (62 aa)).

The protein resides in the cytoplasm. It is found in the cytoskeleton. The protein localises to the cell cortex. Actin-binding protein required for multicellular morphogenesis. Substrate of pkgB and/or pkbA. The protein is Talin-B (talB) of Dictyostelium discoideum (Social amoeba).